We begin with the raw amino-acid sequence, 321 residues long: Solute carrier family 25 member 33 (321 aa).

Solcar repeat units lie at residues 9 to 118 (ENTL…AKEQ), 126 to 213 (NSNI…LKKY), and 231 to 315 (TNFF…IVYL). The next 6 helical transmembrane spans lie at 12–32 (LLHLFAGGCGGTVGAIFTCPL), 49–65 (VYYPQVHLGTISGAGVV), 121–141 (GVFVPNSNIVHVFSAGSAAFV), 190–210 (LTASYAGISETIICFAIYESL), 233–253 (FFGLMAAAALSKGCASCVAYP), and 298–318 (QIPNTAIVLSTYELIVYLLED).

Belongs to the mitochondrial carrier (TC 2.A.29) family.

It localises to the mitochondrion inner membrane. The enzyme catalyses UTP(in) + UDP(out) = UTP(out) + UDP(in). It carries out the reaction dUTP(out) + UTP(in) = dUTP(in) + UTP(out). It catalyses the reaction 5-methyl-UTP(out) + UTP(in) = 5-methyl-UTP(in) + UTP(out). The catalysed reaction is 5-methyl-UDP(out) + UTP(in) = 5-methyl-UDP(in) + UTP(out). The enzyme catalyses UTP(in) + CTP(out) = UTP(out) + CTP(in). It carries out the reaction CDP(out) + UTP(in) = CDP(in) + UTP(out). It catalyses the reaction dCTP(out) + UTP(in) = dCTP(in) + UTP(out). The catalysed reaction is dCDP(out) + UTP(in) = dCDP(in) + UTP(out). The enzyme catalyses UTP(in) + GTP(out) = UTP(out) + GTP(in). It carries out the reaction UTP(in) + GDP(out) = UTP(out) + GDP(in). It catalyses the reaction dGTP(out) + UTP(in) = dGTP(in) + UTP(out). The catalysed reaction is dGDP(out) + UTP(in) = dGDP(in) + UTP(out). The enzyme catalyses ITP(out) + UTP(in) = ITP(in) + UTP(out). Mitochondrial transporter that imports/exports pyrimidine nucleotides into and from mitochondria. Selectively transports uridine, thymidine, guanosine, cytosine and inosine (deoxy)nucleoside di- and triphosphates by an antiport mechanism. May import (deoxy)nucleoside triphosphates in exchange for intramitochondrial (deoxy)nucleoside diphosphates, thus providing precursors necessary for de novo synthesis of mitochondrial DNA and RNA while exporting products of their catabolism. Participates in mitochondrial genome maintenance, regulation of mitochondrial membrane potential and mitochondrial respiration. Upon INS or IGF1 stimulation regulates cell growth and proliferation by controlling mitochondrial DNA replication and transcription, the ratio of mitochondria-to nuclear-encoded components of the electron transport chain resulting in control of mitochondrial ROS production. Participates in dendritic cell endocytosis and may associate with mitochondrial oxidative phosphorylation. The polypeptide is Solute carrier family 25 member 33 (SLC25A33) (Bos taurus (Bovine)).